The sequence spans 236 residues: Phosphoribosylaminoimidazole-succinocarboxamide synthase (236 aa).

This sequence belongs to the SAICAR synthetase family.

It catalyses the reaction 5-amino-1-(5-phospho-D-ribosyl)imidazole-4-carboxylate + L-aspartate + ATP = (2S)-2-[5-amino-1-(5-phospho-beta-D-ribosyl)imidazole-4-carboxamido]succinate + ADP + phosphate + 2 H(+). It participates in purine metabolism; IMP biosynthesis via de novo pathway; 5-amino-1-(5-phospho-D-ribosyl)imidazole-4-carboxamide from 5-amino-1-(5-phospho-D-ribosyl)imidazole-4-carboxylate: step 1/2. The protein is Phosphoribosylaminoimidazole-succinocarboxamide synthase of Streptococcus equi subsp. zooepidemicus (strain H70).